The primary structure comprises 50 residues: uncharacterized protein (50 aa).

This is an uncharacterized protein from Rickettsia prowazekii (strain Madrid E).